The sequence spans 366 residues: Alanine racemase (366 aa).

Catalysis depends on Lys33, which acts as the Proton acceptor; specific for D-alanine. Lys33 carries the post-translational modification N6-(pyridoxal phosphate)lysine. Arg129 lines the substrate pocket. Tyr253 serves as the catalytic Proton acceptor; specific for L-alanine. Met301 serves as a coordination point for substrate.

The protein belongs to the alanine racemase family. Requires pyridoxal 5'-phosphate as cofactor.

It carries out the reaction L-alanine = D-alanine. It participates in amino-acid biosynthesis; D-alanine biosynthesis; D-alanine from L-alanine: step 1/1. Functionally, catalyzes the interconversion of L-alanine and D-alanine. May also act on other amino acids. This is Alanine racemase (alr) from Xanthomonas oryzae pv. oryzae (strain MAFF 311018).